Here is a 178-residue protein sequence, read N- to C-terminus: Nicotinamide-nucleotide adenylyltransferase (178 aa).

It belongs to the archaeal NMN adenylyltransferase family.

The protein resides in the cytoplasm. It carries out the reaction beta-nicotinamide D-ribonucleotide + ATP + H(+) = diphosphate + NAD(+). The protein operates within cofactor biosynthesis; NAD(+) biosynthesis; NAD(+) from nicotinamide D-ribonucleotide: step 1/1. This chain is Nicotinamide-nucleotide adenylyltransferase, found in Pyrobaculum aerophilum (strain ATCC 51768 / DSM 7523 / JCM 9630 / CIP 104966 / NBRC 100827 / IM2).